The sequence spans 363 residues: Protein arginine N-methyltransferase 2 (363 aa).

ANK repeat units follow at residues 22–46 (AAQT…FQDD) and 48–80 (LGWS…AVDK). Positions 111-363 (KTSAGDNLVF…RLPIAKMSLI (253 aa)) constitute an RMT2 domain. S-adenosyl-L-methionine is bound by residues Phe120, 186 to 191 (FGLGIV), 209 to 211 (EAH), 236 to 237 (WQ), and Asp265.

Belongs to the class I-like SAM-binding methyltransferase superfamily. RMT2 methyltransferase family. As to quaternary structure, monomer.

The protein resides in the cytoplasm. It localises to the nucleus. Its function is as follows. S-adenosyl-L-methionine-dependent protein-arginine N-methyltransferase that methylates the delta-nitrogen atom of arginine residues to form N5-methylarginine (type IV) in target proteins. Monomethylates ribosomal protein L12. This chain is Protein arginine N-methyltransferase 2, found in Cryptococcus neoformans var. neoformans serotype D (strain B-3501A) (Filobasidiella neoformans).